Here is a 537-residue protein sequence, read N- to C-terminus: Chaperonin GroEL 2 (537 aa).

Residues 29 to 32 (TLGP), 86 to 90 (DGTTT), Gly-413, 477 to 479 (NAA), and Asp-493 contribute to the ATP site.

This sequence belongs to the chaperonin (HSP60) family. In terms of assembly, forms a cylinder of 14 subunits composed of two heptameric rings stacked back-to-back. Interacts with the co-chaperonin GroES.

Its subcellular location is the cytoplasm. The enzyme catalyses ATP + H2O + a folded polypeptide = ADP + phosphate + an unfolded polypeptide.. Together with its co-chaperonin GroES, plays an essential role in assisting protein folding. The GroEL-GroES system forms a nano-cage that allows encapsulation of the non-native substrate proteins and provides a physical environment optimized to promote and accelerate protein folding. This Rhodococcus jostii (strain RHA1) protein is Chaperonin GroEL 2.